Here is a 507-residue protein sequence, read N- to C-terminus: Cytochrome P450 52A7 (507 aa).

A helical membrane pass occupies residues L6 to I26. C456 is a binding site for heme.

This sequence belongs to the cytochrome P450 family. It depends on heme as a cofactor.

The protein resides in the membrane. Its function is as follows. Together with an NADPH cytochrome P450 the enzyme system catalyzes the terminal hydroxylation as the first step in the assimilation of alkanes and fatty acids. Preferentially hydroxylates lauric acid. In Candida tropicalis (Yeast), this protein is Cytochrome P450 52A7 (CYP52A7).